The chain runs to 427 residues: O-methyltransferase PaMT (427 aa).

S-adenosyl-L-methionine-binding residues include Trp-230 and Asp-281. The active-site Proton acceptor is His-326.

The protein belongs to the class I-like SAM-binding methyltransferase superfamily. Cation-independent O-methyltransferase family. COMT subfamily. S-adenosyl-L-methionine serves as cofactor.

The protein operates within mycotoxin biosynthesis. In terms of biological role, O-methyltransferase; part of the 2 gene clusters that mediate the biosynthesis of fusicoccins, diterpene glucosides that display phytohormone-like activity and function as potent activators of plasma membrane H(+)-ATPases in plants by modifying 14-3-3 proteins and cause the plant disease constriction canker. The first step in the pathway is performed by the fusicoccadiene synthase PaFS that possesses both prenyl transferase and terpene cyclase activity, converting isopentenyl diphosphate and dimethylallyl diphosphate into geranylgeranyl diphosphate (GGDP) and successively converting GGDP into fusicocca-2,10(14)-diene, a precursor for fusicoccin H. The second step is the oxidation at the C-8 position by the cytochrome P450 monooxygenase PaP450-2 to yield fusicocca-2,10(14)-diene-8-beta-ol. The cytochrome P450 monooxygenase PaP450-1 then catalyzes the hydroxylation at the C-16 position to produce fusicocca-2,10(14)-diene-8-beta,16-diol. The dioxygenase fc-dox then catalyzes the 16-oxydation of fusicocca-2,10(14)-diene-8-beta,16-diol to yield an aldehyde (8-beta-hydroxyfusicocca-1,10(14)-dien-16-al). The short-chain dehydrogenase/reductase fc-sdr catalyzes the reduction of the aldehyde to yield fusicocca-1,10(14)-diene-8-beta,16-diol. The next step is the hydroxylation at C-9 performed by the cytochrome P450 monooxygenase PaP450-3 that leads to fusicoccin H aglycon which is glycosylated to fusicoccin H by the O-glycosyltransferase PaGT. Hydroxylation at C-12 by the cytochrome P450 monooxygenase PaP450-4 leads then to the production of fusicoccin Q and is followed by methylation by the O-methyltransferase PaMT to yield fusicoccin P. Fusicoccin P is further converted to fusicoccin J via prenylation by the O-glucose prenyltransferase PaPT. Cytochrome P450 monooxygenase PaP450-5 then performs hydroxylation at C-19 to yield dideacetyl-fusicoccin A which is acetylated to 3'-O-deacetyl-fusicoccin A by the O-acetyltransferase PaAT-2. Finally, a another acetylation by the O-acetyltransferase PaAT-1 yields fusicoccin A. The polypeptide is O-methyltransferase PaMT (Phomopsis amygdali (Fusicoccum amygdali)).